The primary structure comprises 359 residues: Probable isoaspartyl peptidase/L-asparaginase 3 (359 aa).

Threonine 224 functions as the Nucleophile in the catalytic mechanism. Substrate-binding positions include 252-255 (RVGD) and 275-278 (TGDG).

Belongs to the Ntn-hydrolase family. Heterotetramer of two alpha and two beta chains arranged as a dimer of alpha/beta heterodimers. In terms of processing, cleaved into an alpha and beta chain by autocatalysis; this activates the enzyme. The N-terminal residue of the beta subunit is responsible for the nucleophile hydrolase activity.

It catalyses the reaction Cleavage of a beta-linked Asp residue from the N-terminus of a polypeptide.. Functionally, acts in asparagine catabolism but also in the final steps of protein degradation via hydrolysis of a range of isoaspartyl dipeptides. In Arabidopsis thaliana (Mouse-ear cress), this protein is Probable isoaspartyl peptidase/L-asparaginase 3.